A 207-amino-acid chain; its full sequence is Dephospho-CoA kinase (207 aa).

In terms of domain architecture, DPCK spans 10-207; sequence ILGLTGGIGS…FYLTLRGGQS (198 aa). 18-23 lines the ATP pocket; the sequence is GSGKSA.

Belongs to the CoaE family.

The protein localises to the cytoplasm. The enzyme catalyses 3'-dephospho-CoA + ATP = ADP + CoA + H(+). It participates in cofactor biosynthesis; coenzyme A biosynthesis; CoA from (R)-pantothenate: step 5/5. Functionally, catalyzes the phosphorylation of the 3'-hydroxyl group of dephosphocoenzyme A to form coenzyme A. In Pseudomonas savastanoi pv. phaseolicola (strain 1448A / Race 6) (Pseudomonas syringae pv. phaseolicola (strain 1448A / Race 6)), this protein is Dephospho-CoA kinase.